The primary structure comprises 168 residues: MNVMQKPFIAKATINIGVGEGGEKLTRAEKLIETLVDQKPVRTYSKVTNPEFGIRKKQPIACKVTLRGEKADKIISMVLSGLENRIKASQFDKEGNVSFGIREHIDIPGVKYDPDIGIFGMDVSVTFQKPGHRIKERRLRPKKLPQAQRVTKEESMEYMKENFNVTIE.

The protein belongs to the universal ribosomal protein uL5 family. In terms of assembly, part of the 50S ribosomal subunit; contacts the 5S rRNA and probably tRNA. Forms a bridge to the 30S subunit in the 70S ribosome.

This is one of the proteins that bind and probably mediate the attachment of the 5S RNA into the large ribosomal subunit, where it forms part of the central protuberance. In the 70S ribosome it contacts protein S13 of the 30S subunit (bridge B1b), connecting the 2 subunits; this bridge is implicated in subunit movement. May contact the P site tRNA; the 5S rRNA and some of its associated proteins might help stabilize positioning of ribosome-bound tRNAs. The sequence is that of Large ribosomal subunit protein uL5 from Methanosphaera stadtmanae (strain ATCC 43021 / DSM 3091 / JCM 11832 / MCB-3).